The sequence spans 706 residues: MTALWVIVLCGALSIVYAIWATSSVLAADQGNARMQEIAGAVREGAQAYLKRQYMTIAIVGVVIFALLAYFLGILVAIGFAIGAILSGAAGFIGMNVSVRANVRTAQAATTSLAGGLELAFKAGAITGLLVAGLALLGVTLYFIYLIHFAGLQANSRTVVDALVALGFGASLISIFARLGGGIFTKGADVGGDLVGKVEAGIPEDDPRNPATIADNVGDNVGDCAGMAADLFETYAVTAVATMVLAAIFFGSATPDQLQSVMTLPLAIGGICILTSIAGTFFVKLGASQSIMGALYKGLIATGVLSLVGVGVVIHQLIGFGPLPGVSYTGLALFECGIVGLAVTGLIIWITEYYTGTDFRPVKSIAQASVTGHGTNVIQGLAISMESTALPAIVIIAGILITYSLAGLFGIAIATTTMLALAGMIVALDAFGPVTDNAGGIAEMAGLPKEVRKSTDALDAVGNTTKAVTKGYAIGSAGLGALVLFAAYNEDLKFFIAQKSPYFVGVAPDFSLNNPYVVVGLLFGGLLPYLFGAMGMTAVGRAAGAIVEEVRRQFREKPGIMKGTDKPDYGKAVDLLTKAAIKEMIIPSLLPVLSPIFVYFAIYAIAGGGAAGKSAAFSAVGAMLLGVIVTGLFVAISMTSGGGAWDNAKKYIEDGHHGGKGSDAHKAAVTGDTVGDPYKDTAGPAVNPMIKITNIVALLLLAILAH.

5 consecutive transmembrane segments (helical) span residues 1 to 21 (MTAL…AIWA), 62 to 82 (VVIF…GFAI), 83 to 103 (GAIL…RANV), 129 to 149 (LLVA…LIHF), and 164 to 184 (VALG…GGIF). Lysine 186 contributes to the substrate binding site. Mg(2+) is bound by residues aspartate 189, aspartate 193, asparagine 216, and aspartate 219. 6 helical membrane passes run 231–251 (LFET…IFFG), 263–283 (TLPL…TFFV), 300–320 (IATG…LIGF), 330–350 (GLAL…IIWI), 393–413 (IVII…GIAI), and 414–434 (ATTT…FGPV). Mg(2+) is bound at residue aspartate 436. 4 helical membrane-spanning segments follow: residues 467-487 (AVTK…LFAA), 516-536 (YVVV…AMGM), 585-605 (IIPS…IYAI), and 616-636 (AFSA…FVAI). Residues aspartate 646, aspartate 672, and aspartate 676 each contribute to the Ca(2+) site. Lysine 679 is a binding site for substrate. Residues 685–705 (AVNPMIKITNIVALLLLAILA) form a helical membrane-spanning segment.

This sequence belongs to the H(+)-translocating pyrophosphatase (TC 3.A.10) family. K(+)-insensitive subfamily. In terms of assembly, homodimer. The cofactor is Mg(2+).

Its subcellular location is the cell inner membrane. It catalyses the reaction diphosphate + H2O + H(+)(in) = 2 phosphate + 2 H(+)(out). Proton pump that utilizes the energy of pyrophosphate hydrolysis as the driving force for proton movement across the membrane. Generates a proton motive force. The sequence is that of K(+)-insensitive pyrophosphate-energized proton pump from Rhodopseudomonas palustris (strain ATCC BAA-98 / CGA009).